Reading from the N-terminus, the 396-residue chain is L-lactate dehydrogenase (396 aa).

Residues 1–380 (MIISAASDYR…TQDSLVQGLG (380 aa)) enclose the FMN hydroxy acid dehydrogenase domain. Substrate is bound at residue Tyr-24. Ser-106 and Gln-127 together coordinate FMN. A substrate-binding site is contributed by Tyr-129. An FMN-binding site is contributed by Thr-155. Arg-164 lines the substrate pocket. Lys-251 is an FMN binding site. The Proton acceptor role is filled by His-275. Arg-278 is a binding site for substrate. 306–330 (DSGIRNGLDVVRMIALGADTVLLGR) contacts FMN.

Belongs to the FMN-dependent alpha-hydroxy acid dehydrogenase family. Requires FMN as cofactor.

It is found in the cell inner membrane. The catalysed reaction is (S)-lactate + A = pyruvate + AH2. Functionally, catalyzes the conversion of L-lactate to pyruvate. Is coupled to the respiratory chain. The protein is L-lactate dehydrogenase of Shigella boydii serotype 18 (strain CDC 3083-94 / BS512).